Reading from the N-terminus, the 213-residue chain is Elongation factor 1-beta (213 aa).

Residues 67-80 show a composition bias toward low complexity; that stretch reads AGKAPAASGSAAAA. The segment at 67 to 88 is disordered; it reads AGKAPAASGSAAAAAEEEDDED.

The protein belongs to the EF-1-beta/EF-1-delta family. As to quaternary structure, EF-1 is composed of 4 subunits: alpha, beta, delta, and gamma.

EF-1-beta and EF-1-delta stimulate the exchange of GDP bound to EF-1-alpha to GTP. The protein is Elongation factor 1-beta (EFB1) of Candida albicans (strain WO-1) (Yeast).